Consider the following 285-residue polypeptide: UPF0354 protein MW1686 (285 aa).

Belongs to the UPF0354 family.

The chain is UPF0354 protein MW1686 from Staphylococcus aureus (strain MW2).